The following is a 150-amino-acid chain: Large ribosomal subunit protein bL9 (150 aa).

This sequence belongs to the bacterial ribosomal protein bL9 family.

Functionally, binds to the 23S rRNA. This is Large ribosomal subunit protein bL9 from Shewanella loihica (strain ATCC BAA-1088 / PV-4).